We begin with the raw amino-acid sequence, 41 residues long: ORF3c protein (41 aa).

In terms of biological role, may play a role in host modulation. This is ORF3c protein from Severe acute respiratory syndrome coronavirus 2 (2019-nCoV).